The following is a 609-amino-acid chain: UvrABC system protein C (609 aa).

The GIY-YIG domain maps to 15-92 (TGSGVYQMQD…IKQFRPRYNV (78 aa)). A UVR domain is found at 202–237 (DQVIIKLTERMEVASENLVFEEAAHYRDQIRQLRRL).

This sequence belongs to the UvrC family. In terms of assembly, interacts with UvrB in an incision complex.

It is found in the cytoplasm. The UvrABC repair system catalyzes the recognition and processing of DNA lesions. UvrC both incises the 5' and 3' sides of the lesion. The N-terminal half is responsible for the 3' incision and the C-terminal half is responsible for the 5' incision. The protein is UvrABC system protein C of Coxiella burnetii (strain CbuG_Q212) (Coxiella burnetii (strain Q212)).